A 369-amino-acid polypeptide reads, in one-letter code: N-succinylamino acid racemase (369 aa).

The active-site Proton donor is Lys163. Mg(2+) contacts are provided by Asp188, Glu213, and Asp238. Lys262 (proton acceptor) is an active-site residue.

Belongs to the mandelate racemase/muconate lactonizing enzyme family. MenC type 2 subfamily. As to quaternary structure, homooctamer. Tetramer of dimers. A divalent metal cation is required as a cofactor.

It catalyses the reaction (1R,6R)-6-hydroxy-2-succinyl-cyclohexa-2,4-diene-1-carboxylate = 2-succinylbenzoate + H2O. Functionally, acts as a N-succinylamino acid racemase (NSAR) that catalyzes the racemization of N-succinyl-L-phenylglycine. Also converts 2-succinyl-6-hydroxy-2,4-cyclohexadiene-1-carboxylate (SHCHC) to 2-succinylbenzoate (OSB). Catalyzes both N-succinylamino acid racemization and OSB synthesis at equivalent rates. However, NSAR activity is probably the protein's biological function, because menaquinone biosynthesis genes are missing in this species. The sequence is that of N-succinylamino acid racemase from Thermus thermophilus (strain ATCC 27634 / DSM 579 / HB8).